The chain runs to 185 residues: Ribosome-recycling factor (185 aa).

Belongs to the RRF family.

It is found in the cytoplasm. Responsible for the release of ribosomes from messenger RNA at the termination of protein biosynthesis. May increase the efficiency of translation by recycling ribosomes from one round of translation to another. The chain is Ribosome-recycling factor from Buchnera aphidicola subsp. Acyrthosiphon pisum (strain APS) (Acyrthosiphon pisum symbiotic bacterium).